A 320-amino-acid polypeptide reads, in one-letter code: Protein LATERAL ROOT PRIMORDIUM 1 (320 aa).

The interval 90–110 is disordered; that stretch reads QTTVGTSSNNSGSGSGASGTA. Zn(2+)-binding residues include Cys-112, Cys-115, Cys-123, Cys-128, Cys-132, and Cys-139. Positions 112–139 form a DNA-binding region, zn(2)-C6 fungal-type; degenerate; the sequence is CQDCGNQAKKECKQRRCRTCCKSRGFDC. Residues 150-223 are disordered; it reads AARRRERQVM…QDGGGSREAW (74 aa). A compositionally biased stretch (low complexity) spans 168-177; it reads GSSLSTSSGT. The segment covering 193-214 has biased composition (polar residues); that stretch reads ATSHTSTSNTPPQSFETSSSRQ. A Required for homo- and heterodimerization motif is present at residues 256–259; that stretch reads IGGH.

The protein belongs to the SHI protein family. Homodimer. As to expression, restricted to lateral root primordia.

It is found in the nucleus. In terms of biological role, transcription activator that binds DNA on 5'-ACTCTAC-3' and promotes auxin homeostasis-regulating gene expression (e.g. YUC genes), as well as genes affecting stamen development, cell expansion and timing of flowering. Synergistically with other SHI-related proteins, regulates gynoecium, stamen and leaf development in a dose-dependent manner, controlling apical-basal patterning. Promotes style and stigma formation, and influence vascular development during gynoecium development. May also have a role in the formation and/or maintenance of the shoot apical meristem (SAM). Modulates root growth. The chain is Protein LATERAL ROOT PRIMORDIUM 1 (LRP1) from Arabidopsis thaliana (Mouse-ear cress).